Here is a 455-residue protein sequence, read N- to C-terminus: Ribulose bisphosphate carboxylase large chain (455 aa).

Lys-5 is subject to N6,N6,N6-trimethyllysine. The substrate site is built by Asn-114 and Thr-164. Lys-166 (proton acceptor) is an active-site residue. Lys-168 serves as a coordination point for substrate. Lys-192, Asp-194, and Glu-195 together coordinate Mg(2+). An N6-carboxylysine modification is found at Lys-192. His-285 functions as the Proton acceptor in the catalytic mechanism. Substrate-binding residues include Arg-286, His-318, and Ser-370.

Belongs to the RuBisCO large chain family. Type I subfamily. Heterohexadecamer of 8 large chains and 8 small chains; disulfide-linked. The disulfide link is formed within the large subunit homodimers. The cofactor is Mg(2+). In terms of processing, the disulfide bond which can form in the large chain dimeric partners within the hexadecamer appears to be associated with oxidative stress and protein turnover.

It localises to the plastid. Its subcellular location is the chloroplast. The enzyme catalyses 2 (2R)-3-phosphoglycerate + 2 H(+) = D-ribulose 1,5-bisphosphate + CO2 + H2O. It carries out the reaction D-ribulose 1,5-bisphosphate + O2 = 2-phosphoglycolate + (2R)-3-phosphoglycerate + 2 H(+). Functionally, ruBisCO catalyzes two reactions: the carboxylation of D-ribulose 1,5-bisphosphate, the primary event in carbon dioxide fixation, as well as the oxidative fragmentation of the pentose substrate in the photorespiration process. Both reactions occur simultaneously and in competition at the same active site. The sequence is that of Ribulose bisphosphate carboxylase large chain from Senna didymobotrya (Popcorn cassia).